The primary structure comprises 286 residues: Putative sensory transducer protein YfmS (286 aa).

One can recognise a Methyl-accepting transducer domain in the interval 68-286; it reads ITDAIRSNQK…KMAEKALEEE (219 aa).

This sequence belongs to the methyl-accepting chemotaxis (MCP) protein family.

Chemotactic-signal transducers respond to changes in the concentration of attractants and repellents in the environment, transduce a signal from the outside to the inside of the cell, and facilitate sensory adaptation through the variation of the level of methylation. Attractants increase the level of methylation while repellents decrease the level of methylation. In Bacillus subtilis (strain 168), this protein is Putative sensory transducer protein YfmS (yfmS).